Consider the following 176-residue polypeptide: Natural cytotoxicity triggering receptor 3 (176 aa).

An N-terminal signal peptide occupies residues 1–18; that stretch reads MAWMLLLILIMVYPGSCA. Residues 19–126 form the Ig-like domain; sequence LWVSQPPEIR…VGTGNGTRLV (108 aa). Residues 19 to 135 are Extracellular-facing; it reads LWVSQPPEIR…VVEKEYPQLG (117 aa). The cysteines at positions 39 and 108 are disulfide-linked. N-linked (GlcNAc...) asparagine glycans are attached at residues Asn42 and Asn121. A helical transmembrane segment spans residues 136–156; that stretch reads AGTVLLLRAGFYAVSFLSVAV. Over 157-176 the chain is Cytoplasmic; it reads GSTLYYQGKCHCHMGTHCHS.

It belongs to the natural cytotoxicity receptor (NCR) family. Homodimer in the unliganted form. Interacts with CD3Z. Interacts with and is activated by binding to NCR3LG1. Interacts with and is activated by binding to BAG6. Interacts with and is inhibited by binding to LGALS3.

Its subcellular location is the cell membrane. Its function is as follows. Cell membrane receptor of natural killer/NK cells that is activated by binding of extracellular ligands including BAG6 and NCR3LG1. Stimulates NK cells cytotoxicity toward neighboring cells producing these ligands. It controls, for instance, NK cells cytotoxicity against tumor cells. Engagement of NCR3 by BAG6 also promotes myeloid dendritic cells (DC) maturation, both through killing DCs that did not acquire a mature phenotype, and inducing the release by NK cells of TNFA and IFNG that promote DC maturation. The polypeptide is Natural cytotoxicity triggering receptor 3 (NCR3) (Macaca fascicularis (Crab-eating macaque)).